A 233-amino-acid polypeptide reads, in one-letter code: MNTPAQLSLPLYLPDDETFASFWPGDNSSLLAALQNVLRQEHSGYIYLWAREGAGRSHLLHAACAELSQRGDAVGYVPLDKRTWFVPEVLDGMEQLSLVCIDNIECIAGDELWEMAIFDLYNRILESGKTRLLITGDRPPRQLNLGLPDLASRLDWGQIYKLQPLSDEDKLQALQLRARLRGFELPEDVGRFLLKRLDREMRTLFMTLDQLDRASITAQRKLTIPFVKEILKL.

It belongs to the DnaA family. HdA subfamily. As to quaternary structure, the active form seems to be an ADP-bound monomer. Forms the RIDA complex (regulatory inactivation of DnaA) of ATP-DnaA, ADP-Hda and the DNA-loaded beta sliding clamp (dnaN).

Its function is as follows. Mediates the interaction of DNA replication initiator protein DnaA with DNA polymerase subunit beta sliding clamp (dnaN). Stimulates hydrolysis of ATP-DnaA to ADP-DnaA, rendering DnaA inactive for reinitiation, a process called regulatory inhibition of DnaA or RIDA. The polypeptide is DnaA regulatory inactivator Hda (Escherichia fergusonii (strain ATCC 35469 / DSM 13698 / CCUG 18766 / IAM 14443 / JCM 21226 / LMG 7866 / NBRC 102419 / NCTC 12128 / CDC 0568-73)).